The sequence spans 267 residues: MPTGKLRQKPPYAAIMTNSPVTPSTETQQPKRDALYARFLPQEADAPPVEWLIAEGLTDYEEALAFMEARVQAIREGTASELVWLVEHPPLYTAGTSANAEDLLTPDRFPVFNTGRGGEYTYHGPGQRVAYVMLDLKRRREDVRAFVASLEQWIIETLAAFNIMGERREDRVGVWVVRPEKPRLADGSMCEDKIAAIGIRLRRWVSFHGIAINVEPDLSHYGGIVPCGISEHGVTSLVDLGLPVTMGDVDVALGKAFESVFGPRQTK.

Residues 77–265 (GTASELVWLV…AFESVFGPRQ (189 aa)) enclose the BPL/LPL catalytic domain. Residues 116 to 123 (RGGEYTYH), 196 to 198 (AIG), and 209 to 211 (GIA) contribute to the substrate site. Cys227 acts as the Acyl-thioester intermediate in catalysis.

It belongs to the LipB family.

It localises to the cytoplasm. It carries out the reaction octanoyl-[ACP] + L-lysyl-[protein] = N(6)-octanoyl-L-lysyl-[protein] + holo-[ACP] + H(+). It functions in the pathway protein modification; protein lipoylation via endogenous pathway; protein N(6)-(lipoyl)lysine from octanoyl-[acyl-carrier-protein]: step 1/2. Its function is as follows. Catalyzes the transfer of endogenously produced octanoic acid from octanoyl-acyl-carrier-protein onto the lipoyl domains of lipoate-dependent enzymes. Lipoyl-ACP can also act as a substrate although octanoyl-ACP is likely to be the physiological substrate. In Brucella suis biovar 1 (strain 1330), this protein is Octanoyltransferase.